The chain runs to 285 residues: Malectin (285 aa).

The signal sequence occupies residues 1–26 (MRRVTLHCAARLVIAALWLLVEVCRA). The Lumenal portion of the chain corresponds to 27–262 (ESGAQSLAER…TPNPYATDNS (236 aa)). Residues Tyr-71, Tyr-93, Tyr-120, Phe-121, and Asp-190 each contribute to the a carbohydrate site. The tract at residues 209 to 258 (KLQPHPGLEKREEEEEEEEEGEGPEGEKKSASTSPKNPVRSGPRTPNPYA) is disordered. Over residues 220-232 (EEEEEEEEEGEGP) the composition is skewed to acidic residues. A glycan (N-linked (GlcNAc...) asparagine) is linked at Asn-261. A helical transmembrane segment spans residues 263 to 283 (SLMFPILVAFGVFIPTLFCLC). At 284–285 (RL) the chain is on the cytoplasmic side.

This sequence belongs to the malectin family.

It is found in the endoplasmic reticulum membrane. Its function is as follows. Carbohydrate-binding protein with a strong ligand preference for Glc2-N-glycan. May play a role in the early steps of protein N-glycosylation. This is Malectin from Danio rerio (Zebrafish).